A 1132-amino-acid polypeptide reads, in one-letter code: Mediator of RNA polymerase II transcription subunit 5 (1132 aa).

The span at 998 to 1023 (KGDVDIKGEDLHEKNDSAEVRQETQP) shows a compositional bias: basic and acidic residues. The disordered stretch occupies residues 998–1070 (KGDVDIKGED…RTNNVPMIKA (73 aa)). The segment covering 1047–1057 (YEEEEENEDND) has biased composition (acidic residues).

It belongs to the Mediator complex subunit 5 family. In terms of assembly, component of the Mediator complex, which is composed of at least 21 subunits that form three structurally distinct submodules. The Mediator head module contains MED6, MED8, MED11, SRB4/MED17, SRB5/MED18, ROX3/MED19, SRB2/MED20 and SRB6/MED22, the middle module contains MED1, MED4, NUT1/MED5, MED7, CSE2/MED9, NUT2/MED10, SRB7/MED21 and SOH1/MED31, and the tail module contains MED2, PGD1/MED3, RGR1/MED14, GAL11/MED15 and SIN4/MED16. The head and the middle modules interact directly with RNA polymerase II, whereas the elongated tail module interacts with gene-specific regulatory proteins.

It localises to the nucleus. In terms of biological role, component of the Mediator complex, a coactivator involved in the regulated transcription of nearly all RNA polymerase II-dependent genes. Mediator functions as a bridge to convey information from gene-specific regulatory proteins to the basal RNA polymerase II transcription machinery. The Mediator complex, having a compact conformation in its free form, is recruited to promoters by direct interactions with regulatory proteins and serves for the assembly of a functional preinitiation complex with RNA polymerase II and the general transcription factors. The Mediator complex unfolds to an extended conformation and partially surrounds RNA polymerase II, specifically interacting with the unphosphorylated form of the C-terminal domain (CTD) of RNA polymerase II. The Mediator complex dissociates from the RNA polymerase II holoenzyme and stays at the promoter when transcriptional elongation begins. The polypeptide is Mediator of RNA polymerase II transcription subunit 5 (NUT1) (Saccharomyces cerevisiae (strain ATCC 204508 / S288c) (Baker's yeast)).